Reading from the N-terminus, the 301-residue chain is UDP-N-acetylenolpyruvoylglucosamine reductase 1 (301 aa).

In terms of domain architecture, FAD-binding PCMH-type spans 29-196 (KIGGPADILI…LEAEFQLQIG (168 aa)). The active site involves Arg-174. Ser-225 functions as the Proton donor in the catalytic mechanism. Glu-295 is an active-site residue.

It belongs to the MurB family. Requires FAD as cofactor.

It localises to the cytoplasm. It carries out the reaction UDP-N-acetyl-alpha-D-muramate + NADP(+) = UDP-N-acetyl-3-O-(1-carboxyvinyl)-alpha-D-glucosamine + NADPH + H(+). It functions in the pathway cell wall biogenesis; peptidoglycan biosynthesis. Its function is as follows. Cell wall formation. In Bacillus cereus (strain ZK / E33L), this protein is UDP-N-acetylenolpyruvoylglucosamine reductase 1.